The primary structure comprises 286 residues: ATP synthase gamma chain (286 aa).

It belongs to the ATPase gamma chain family. As to quaternary structure, F-type ATPases have 2 components, CF(1) - the catalytic core - and CF(0) - the membrane proton channel. CF(1) has five subunits: alpha(3), beta(3), gamma(1), delta(1), epsilon(1). CF(0) has three main subunits: a, b and c.

It is found in the cell inner membrane. Produces ATP from ADP in the presence of a proton gradient across the membrane. The gamma chain is believed to be important in regulating ATPase activity and the flow of protons through the CF(0) complex. The protein is ATP synthase gamma chain of Shewanella woodyi (strain ATCC 51908 / MS32).